Reading from the N-terminus, the 532-residue chain is MCNPSTTTTTTGSENQESRTGLFLDLFSINSFEPTKRNLRHCENRGSPLMAEAVTEAKSLFTLAFPIAVTALVLYLRSAVSMFFLGQLGDLELAAGSLAIAFANITGYSVLSGLALGMEPLCSQAFGAHRFKLLSLTLHRTVVFLLVCCVPISVLWFNVGKISVYLHQDPDIAKLAQTYLIFSLPDLLTNTLLHPIRIYLRAQGIIHPVTLASLSGAVFHLPANLFLVSYLRLGLTGVAVASSITNIFVVAFLVCYVWASGLHAPTWTDPTRDCFRGWAPLLRLAGPSCVSVCLEWWWYEIMIVLCGLLVNPRSTVAAMGVLIQTTSFLYVFPSSLSFAVSTRVGNELGANRPKTAKLTATVAIVFAAVTGIIAAAFAYSVRNAWGRIFTGDKEILQLTAAALPILGLCEIGNCPQTVGCGVVRGTARPSTAANVNLGAFYLVGMPVAVGLGFWAGIGFNGLWVGLLAAQISCAGLMMYVVGTTDWESEAKKAQTLTCAETVENDIIKAVVASTIDGECDEAEPLIRITVLY.

A run of 12 helical transmembrane segments spans residues 65–85 (FPIAVTALVLYLRSAVSMFFL), 98–118 (LAIAFANITGYSVLSGLALGM), 142–162 (VVFLLVCCVPISVLWFNVGKI), 176–196 (AQTYLIFSLPDLLTNTLLHPI), 208–228 (PVTLASLSGAVFHLPANLFLV), 238–258 (VAVASSITNIFVVAFLVCYVW), 290–310 (VSVCLEWWWYEIMIVLCGLLV), 316–336 (VAAMGVLIQTTSFLYVFPSSL), 358–378 (LTATVAIVFAAVTGIIAAAFA), 395–415 (ILQLTAAALPILGLCEIGNCP), 439–459 (AFYLVGMPVAVGLGFWAGIGF), and 461–481 (GLWVGLLAAQISCAGLMMYVV).

This sequence belongs to the multi antimicrobial extrusion (MATE) (TC 2.A.66.1) family. In terms of tissue distribution, expressed in the meristematic regions. Mainly detected in tissues where cells were actively dividing, such as leaf primordia and young leaves, the junction between lateral root and the primary root, root cap, hydathodes, the junction between secondary inflorescence and the main inflorescence, young stamen and young siliques. Highly expressed at the junction between the hypocotyl and the root, and at the marginal areas of cotyledons and true leaves, coinciding with the locations of the hydathode. Also highly expressed at the basal regions of the newly emerged lateral roots. In the floral organs, mostly expressed at the style of the pistil.

It is found in the endosome membrane. Its subcellular location is the late endosome membrane. In terms of biological role, functions as a multidrug and toxin extrusion transporter that negatively regulates plant disease resistance. Plays an important role in maintaining normal plant architecture, possibly by regulating local auxin biosynthesis. May act as a negative regulator of hypocotyl cell elongation in the light. This Arabidopsis thaliana (Mouse-ear cress) protein is Protein DETOXIFICATION 51.